A 66-amino-acid polypeptide reads, in one-letter code: Photosystem II reaction center protein J (66 aa).

The segment at 1–23 (MSGNKSPFPDGRIPDRLPDGRPA) is disordered. The helical transmembrane segment at 37 to 57 (LWLVATAGGMAVLFVVGLFFY) threads the bilayer.

The protein belongs to the PsbJ family. In terms of assembly, PSII is composed of 1 copy each of membrane proteins PsbA, PsbB, PsbC, PsbD, PsbE, PsbF, PsbH, PsbI, PsbJ, PsbK, PsbL, PsbM, PsbT, PsbX, PsbY, PsbZ, Psb30/Ycf12, peripheral proteins PsbO, CyanoQ (PsbQ), PsbU, PsbV and a large number of cofactors. It forms dimeric complexes.

It localises to the cellular thylakoid membrane. Its function is as follows. One of the components of the core complex of photosystem II (PSII). PSII is a light-driven water:plastoquinone oxidoreductase that uses light energy to abstract electrons from H(2)O, generating O(2) and a proton gradient subsequently used for ATP formation. It consists of a core antenna complex that captures photons, and an electron transfer chain that converts photonic excitation into a charge separation. The protein is Photosystem II reaction center protein J of Parasynechococcus marenigrum (strain WH8102).